Here is a 346-residue protein sequence, read N- to C-terminus: GTPase Obg (346 aa).

Residues Met-1–Ile-159 enclose the Obg domain. Residues Ala-160–Gly-327 form the OBG-type G domain. GTP contacts are provided by residues Gly-166–Ser-173, Phe-191–His-195, Asp-212–Gly-215, Asn-279–Asp-282, and Ser-308–Ala-310. Residues Ser-173 and Thr-193 each contribute to the Mg(2+) site.

Belongs to the TRAFAC class OBG-HflX-like GTPase superfamily. OBG GTPase family. As to quaternary structure, monomer. The cofactor is Mg(2+).

The protein resides in the cytoplasm. Functionally, an essential GTPase which binds GTP, GDP and possibly (p)ppGpp with moderate affinity, with high nucleotide exchange rates and a fairly low GTP hydrolysis rate. Plays a role in control of the cell cycle, stress response, ribosome biogenesis and in those bacteria that undergo differentiation, in morphogenesis control. The polypeptide is GTPase Obg (Bradyrhizobium diazoefficiens (strain JCM 10833 / BCRC 13528 / IAM 13628 / NBRC 14792 / USDA 110)).